Reading from the N-terminus, the 486-residue chain is LON peptidase N-terminal domain and RING finger protein C14F5.10c (486 aa).

Residues 169 to 207 (CQICFGMLYDPVVSPCGHTFCGPCLMQALTQSPQCPTCR) form an RING-type zinc finger. One can recognise a Lon N-terminal domain in the interval 250-472 (ESWLPLFISM…LVLIWLTQLQ (223 aa)).

This Schizosaccharomyces pombe (strain 972 / ATCC 24843) (Fission yeast) protein is LON peptidase N-terminal domain and RING finger protein C14F5.10c.